A 545-amino-acid chain; its full sequence is MAEASSLGRQSPRVVSCLEHSLCPGEPGLQTTAVVSMGSGDHQFNLAEILSQNYSVRGECEEASRCPDKPKEELEKDFISQSNDMPFDELLALYGYEASDPISDRESEGGDVAPNLPDMTLDKEQIAKDLLSGEEEEETQSSADDLTPSVTSHEASDLFPNRSGSRFLADEDREPGSSASSDTEEDSLPANKCKKEIMVGPQFQADLSNLHLNRHCEKIYENEDQLLWDPSVLPEREVEEFLYRAVKRRWHEMAGPQLPEGEAVKDSEQALYELVKCNFNVEEALRRLRFNVKVIRDGLCAWSEEECRNFEHGFRVHGKNFHLIQANKVRTRSVGECVEYYYLWKKSERYDYFAQQTRLGRRKYVPSGTTDADQDLDGSDPDGPGRPRPEQDTLTGMRTDPLSVDGTAGGLDEPGVASDGLPSSEPGPCSFQQLDESPAVPLSHRPPALADPASYQPAVTAPEPDASPRLAVDFALPKELPLISSHVDLSGDPEETVAPAQVALSVTEFGLIGIGDVNPFLAAHPTCPAPGLHSEPLSHCNVMTC.

Ser11 bears the Phosphoserine mark. Residues 100 to 189 (DPISDRESEG…SSDTEEDSLP (90 aa)) are disordered. Residues 140–153 (QSSADDLTPSVTSH) are compositionally biased toward polar residues. The 98-residue stretch at 195–292 (KEIMVGPQFQ…EALRRLRFNV (98 aa)) folds into the ELM2 domain. In terms of domain architecture, SANT spans 297-349 (DGLCAWSEEECRNFEHGFRVHGKNFHLIQANKVRTRSVGECVEYYYLWKKSER). A disordered region spans residues 364-464 (YVPSGTTDAD…YQPAVTAPEP (101 aa)).

In terms of assembly, part of a complex containing at least CDYL, MIER1, MIER2, HDAC1 and HDAC2.

The protein resides in the nucleus. Its function is as follows. Transcriptional repressor. The sequence is that of Mesoderm induction early response protein 2 (MIER2) from Homo sapiens (Human).